Consider the following 180-residue polypeptide: Ribonuclease M5 (180 aa).

The 86-residue stretch at 5 to 90 (KQIIIVEGKT…NAFIKKDDIS (86 aa)) folds into the Toprim domain. The Mg(2+) site is built by Glu-11, Asp-59, and Asp-61.

The protein belongs to the ribonuclease M5 family. Mg(2+) is required as a cofactor.

The protein resides in the cytoplasm. The catalysed reaction is Endonucleolytic cleavage of RNA, removing 21 and 42 nucleotides, respectively, from the 5'- and 3'-termini of a 5S-rRNA precursor.. Its function is as follows. Required for correct processing of both the 5' and 3' ends of 5S rRNA precursor. Cleaves both sides of a double-stranded region yielding mature 5S rRNA in one step. The sequence is that of Ribonuclease M5 from Mycoplasma capricolum subsp. capricolum (strain California kid / ATCC 27343 / NCTC 10154).